Here is a 243-residue protein sequence, read N- to C-terminus: Proteasome subunit beta (243 aa).

Residues 1 to 49 constitute a propeptide, removed in mature form; by autocatalysis; it reads MRTPTGDLSDGPAEELGRDQPVFGPEIGEFEHSERRAAQADGEGEMKTG. The segment at 1-50 is disordered; it reads MRTPTGDLSDGPAEELGRDQPVFGPEIGEFEHSERRAAQADGEGEMKTGT. The span at 29–38 shows a compositional bias: basic and acidic residues; that stretch reads EFEHSERRAA. The Nucleophile role is filled by Thr-50.

It belongs to the peptidase T1B family. The 20S proteasome core is composed of 14 alpha and 14 beta subunits that assemble into four stacked heptameric rings, resulting in a barrel-shaped structure. The two inner rings, each composed of seven catalytic beta subunits, are sandwiched by two outer rings, each composed of seven alpha subunits. The catalytic chamber with the active sites is on the inside of the barrel. Has a gated structure, the ends of the cylinder being occluded by the N-termini of the alpha-subunits. Is capped at one or both ends by the proteasome regulatory ATPase, PAN.

It localises to the cytoplasm. It catalyses the reaction Cleavage of peptide bonds with very broad specificity.. With respect to regulation, the formation of the proteasomal ATPase PAN-20S proteasome complex, via the docking of the C-termini of PAN into the intersubunit pockets in the alpha-rings, triggers opening of the gate for substrate entry. Interconversion between the open-gate and close-gate conformations leads to a dynamic regulation of the 20S proteasome proteolysis activity. Its function is as follows. Component of the proteasome core, a large protease complex with broad specificity involved in protein degradation. This chain is Proteasome subunit beta, found in Halorubrum lacusprofundi (strain ATCC 49239 / DSM 5036 / JCM 8891 / ACAM 34).